A 181-amino-acid chain; its full sequence is Bradykinin potentiating and C-type natriuretic peptides (181 aa).

The first 23 residues, 1 to 23 (MFVSRLAASGLLLLALLAVSLDG), serve as a signal peptide directing secretion. The propeptide occupies 24–27 (KPLQ). Pyrrolidone carboxylic acid is present on residues Q28 and Q31. The propeptide occupies 41–43 (LVV). Q44 carries the post-translational modification Pyrrolidone carboxylic acid. The propeptide occupies 50–52 (TQL). Q53 carries the post-translational modification Pyrrolidone carboxylic acid. Residues 59–159 (AGGTTALREE…ARRLKGLAKK (101 aa)) constitute a propeptide that is removed on maturation. The interval 74–150 (EAALDTPPAG…GGGCGGGGGA (77 aa)) is disordered. Positions 104–114 (SKGASATSAAS) are enriched in low complexity. The segment covering 140–150 (AGGGCGGGGGA) has biased composition (gly residues). Residues C165 and C181 are joined by a disulfide bond.

In the N-terminal section; belongs to the bradykinin-potentiating peptide family. This sequence in the C-terminal section; belongs to the natriuretic peptide family. Venom gland.

It is found in the secreted. Its function is as follows. Bradykinin-potentiating peptide both inhibits the activity of the angiotensin-converting enzyme (ACE) and enhances the action of bradykinin by inhibiting the peptidases that inactivate it. It acts as an indirect hypotensive agent. Synthetic Cdt1a, Cdt1b and the short hexapeptide Cdt3 are able to potentiate the hypotensive effect mediated by Bk on the blood pressure of anesthetized rats. In terms of biological role, has a vasorelaxant activity in rat aortic strips and a diuretic potency in anesthetized rats. May act by activating natriuretic receptors (NPR1 and/or NPR2). This chain is Bradykinin potentiating and C-type natriuretic peptides, found in Crotalus durissus terrificus (South American rattlesnake).